A 370-amino-acid chain; its full sequence is Phosphoserine aminotransferase (370 aa).

At Met1 the chain carries N-acetylmethionine. 2 residues coordinate O-phospho-L-serine: His44 and Arg45. Lys51 carries the post-translational modification N6-acetyllysine. Pyridoxal 5'-phosphate is bound by residues Gly79, Cys80, and Trp107. Residue Lys127 is modified to N6-acetyllysine. Residues Thr156, Asp176, and Gln199 each coordinate pyridoxal 5'-phosphate. Residue Lys200 is modified to N6-(pyridoxal phosphate)lysine. Pyridoxal 5'-phosphate-binding residues include Asn241 and Thr242. An N6-acetyllysine mark is found at Lys269, Lys318, and Lys323. A Phosphoserine modification is found at Ser331. Lys333 is modified (N6-acetyllysine). Positions 335, 336, and 342 each coordinate O-phospho-L-serine.

The protein belongs to the class-V pyridoxal-phosphate-dependent aminotransferase family. SerC subfamily. In terms of assembly, homodimer. Pyridoxal 5'-phosphate is required as a cofactor. As to expression, expressed at high levels in the brain, liver, kidney and pancreas, and very weakly expressed in the thymus, prostate, testis and colon.

It carries out the reaction O-phospho-L-serine + 2-oxoglutarate = 3-phosphooxypyruvate + L-glutamate. It participates in amino-acid biosynthesis; L-serine biosynthesis; L-serine from 3-phospho-D-glycerate: step 2/3. Phosphoserine transaminase activity is strongly stimulated by increasing the ionic strength. Its function is as follows. Involved in L-serine biosynthesis via the phosphorylated pathway, a three-step pathway converting the glycolytic intermediate 3-phospho-D-glycerate into L-serine. Catalyzes the second step, that is the pyridoxal 5'-phosphate-dependent transamination of 3-phosphohydroxypyruvate and L-glutamate to O-phosphoserine (OPS) and alpha-ketoglutarate. This is Phosphoserine aminotransferase from Homo sapiens (Human).